The chain runs to 271 residues: Extent of cell elongation protein 1 (271 aa).

The N-terminal stretch at 1-18 (MKFSKIACATVFALSSQA) is a signal peptide. A helical membrane pass occupies residues 62 to 82 (SIIGIIMGILGNIPQVIQIIM).

Polymerizes in solution to form membrane pores. In terms of processing, cleavage by KEX2 generates 8 peptides ECE1-I to ECE1-VIII, all terminating in Lys-Arg. Only peptide ECE1-III, called candidalysin, shows toxin activity.

It localises to the secreted. It is found in the host cell membrane. Its function is as follows. Secreted protein cleaved by KEX2 in 8 similar peptides (ECE1-I to ECE1-VIII). Stimulates biofilm formation. In terms of biological role, acts as a cytolytic peptide toxin that directly damages host epithelial membranes, triggers a danger response signaling pathway and activates epithelial immunity. Polymerizes in solution to form membrane pores to damage epithelial cells. Induces calcium influx, oxidative stress, mitochondrial dysfunction and ATP depletion in host cells, leading to epithelial necrosis. Serves as a danger signal that potentiates the immune response, and more specifically IL-17 response. Induces cytokine/chemokine secretion by host (especially CCL2/3/4, CXCL1 and S100A8), neutrophil recruitment, and promotes mortality in zebrafish and murine models of systemic fungal infection. Mediates distinct epithelial inflammatory responses through p38, EGFR-ERK and TREM-1/DAP12 pathways. Acts as one of the hypha-derived drivers of NLRP3 inflammasome responses in primary macrophages and thus contributes to the capacity to induce maturation and secretion of IL-1beta from primary macrophages. Stimulates mast cells by mediating cross-talk between signaling pathways activated by the dectin-1 receptor and MAPKs. Enables escape via the gasdermin-mediated pyroptosis, as well as a cell lysis pathway associated with macrophage extracellular trap formation termed ETosis. Acts as the main hemolytic factor of C.albicans. As an exotoxine, also promotes alcohol-associated liver disease or oral carcinogenesis. The polypeptide is Extent of cell elongation protein 1 (Candida albicans (strain SC5314 / ATCC MYA-2876) (Yeast)).